We begin with the raw amino-acid sequence, 495 residues long: uncharacterized protein (495 aa).

The disordered stretch occupies residues 337 to 360 (STSNRESDCSGNEDDSSNAKYAKK).

This is an uncharacterized protein from Caenorhabditis elegans.